Reading from the N-terminus, the 202-residue chain is Small ribosomal subunit protein uS4 (202 aa).

Residues 90-152 (MRLDNTVFRL…ERSRRLVETN (63 aa)) form the S4 RNA-binding domain.

It belongs to the universal ribosomal protein uS4 family. Part of the 30S ribosomal subunit. Contacts protein S5. The interaction surface between S4 and S5 is involved in control of translational fidelity.

Functionally, one of the primary rRNA binding proteins, it binds directly to 16S rRNA where it nucleates assembly of the body of the 30S subunit. With S5 and S12 plays an important role in translational accuracy. This is Small ribosomal subunit protein uS4 from Thermosynechococcus vestitus (strain NIES-2133 / IAM M-273 / BP-1).